The chain runs to 271 residues: Methyltransferase psoC (271 aa).

This sequence belongs to the methyltransferase superfamily. LaeA methyltransferase family.

Its pathway is secondary metabolite biosynthesis. In terms of biological role, methyltransferase; part of the gene cluster that mediates the biosynthesis of pseurotin A, a competitive inhibitor of chitin synthase and an inducer of nerve-cell proliferation. The PKS-NRPS hybrid synthetase psoA is responsible for the biosynthesis of azaspirene, one of the first intermediates having the 1-oxa-7-azaspiro[4,4]-non-2-ene-4,6-dione core of pseurotin, via condensation of one acetyl-CoA, 4 malonyl-CoA, and a L-phenylalanine molecule. The dual-functional monooxygenase/methyltransferase psoF seems to be involved in the addition of the C3 methyl group onto the pseurotin scaffold. Azaspirene is then converted to synerazol through 4 steps including oxidation of C17 by the cytochrome P450 monooxygenase psoD, O-methylation of the hydroxy group of C8 by the methyltransferase psoC, and the trans-to-cis isomerization of the C13 olefin by the glutathione S-transferase psoE. The fourth step of synerazol production is performed by the dual-functional monooxygenase/methyltransferase psoF which seems to catalyze the epoxidation of the intermediate deepoxy-synerazol. Synerazol can be attacked by a water molecule nonenzymatically at two different positions to yield two diol products, pseurotin A and pseurotin D. The protein is Methyltransferase psoC of Aspergillus fumigatus (strain ATCC MYA-4609 / CBS 101355 / FGSC A1100 / Af293) (Neosartorya fumigata).